The chain runs to 436 residues: Trigger factor (436 aa).

The 88-residue stretch at 161 to 248 (TDRVTIDLYG…LKKVEQYRLP (88 aa)) folds into the PPIase FKBP-type domain.

This sequence belongs to the FKBP-type PPIase family. Tig subfamily.

Its subcellular location is the cytoplasm. The catalysed reaction is [protein]-peptidylproline (omega=180) = [protein]-peptidylproline (omega=0). Functionally, involved in protein export. Acts as a chaperone by maintaining the newly synthesized protein in an open conformation. Functions as a peptidyl-prolyl cis-trans isomerase. This chain is Trigger factor, found in Baumannia cicadellinicola subsp. Homalodisca coagulata.